The chain runs to 379 residues: Galactose-1-phosphate uridylyltransferase (379 aa).

Positions 1–21 (MSRSGTDPQQRQQASEADAAA) are disordered. Low complexity predominate over residues 9–21 (QQRQQASEADAAA). A Zn(2+)-binding site is contributed by Cys75. UDP-alpha-D-glucose contacts are provided by residues Ala81, 97–98 (ND), and Asn173. His184 contributes to the Zn(2+) binding site. The active-site Tele-UMP-histidine intermediate is His186. Gln188 is a binding site for UDP-alpha-D-glucose. Zn(2+) contacts are provided by Glu202, His301, His319, and His321. UDP-alpha-D-glucose-binding positions include 334 to 337 (KFMV) and 339 to 340 (YE).

This sequence belongs to the galactose-1-phosphate uridylyltransferase type 1 family. As to quaternary structure, homodimer. Zn(2+) is required as a cofactor.

It catalyses the reaction alpha-D-galactose 1-phosphate + UDP-alpha-D-glucose = alpha-D-glucose 1-phosphate + UDP-alpha-D-galactose. The protein operates within carbohydrate metabolism; galactose metabolism. In terms of biological role, plays an important role in galactose metabolism. This Homo sapiens (Human) protein is Galactose-1-phosphate uridylyltransferase (GALT).